We begin with the raw amino-acid sequence, 51 residues long: Insulin (51 aa).

3 disulfides stabilise this stretch: cysteine 8–cysteine 37, cysteine 20–cysteine 50, and cysteine 36–cysteine 41.

The protein belongs to the insulin family. As to quaternary structure, heterodimer of a B chain and an A chain linked by two disulfide bonds.

It localises to the secreted. Functionally, insulin decreases blood glucose concentration. It increases cell permeability to monosaccharides, amino acids and fatty acids. It accelerates glycolysis, the pentose phosphate cycle, and glycogen synthesis in liver. This chain is Insulin (ins), found in Gadus morhua subsp. callarias (Baltic cod).